A 400-amino-acid polypeptide reads, in one-letter code: Exodeoxyribonuclease 7 large subunit (400 aa).

Belongs to the XseA family. As to quaternary structure, heterooligomer composed of large and small subunits.

Its subcellular location is the cytoplasm. The enzyme catalyses Exonucleolytic cleavage in either 5'- to 3'- or 3'- to 5'-direction to yield nucleoside 5'-phosphates.. In terms of biological role, bidirectionally degrades single-stranded DNA into large acid-insoluble oligonucleotides, which are then degraded further into small acid-soluble oligonucleotides. In Clostridium perfringens (strain 13 / Type A), this protein is Exodeoxyribonuclease 7 large subunit.